Consider the following 59-residue polypeptide: Large ribosomal subunit protein bL32 (59 aa).

The span at 1-20 shows a compositional bias: basic residues; sequence MAVPKKKTSKGKRNQRHATW. Positions 1 to 22 are disordered; it reads MAVPKKKTSKGKRNQRHATWKG.

The protein belongs to the bacterial ribosomal protein bL32 family.

In Prochlorococcus marinus (strain NATL1A), this protein is Large ribosomal subunit protein bL32.